The chain runs to 269 residues: Putative biopolymer transport protein ExbD (269 aa).

At 1–40 (MASSPKAPKSHRKFQSIYHPTRPLSLWQDNQHDQGEVRIE) the chain is on the cytoplasmic side. Residues 41–61 (IIPLIDVVFCILTFFILGAVG) traverse the membrane as a helical segment. Topologically, residues 62–269 (LSRQQAISLD…GNTVPSAPQQ (208 aa)) are periplasmic. Residues 190–269 (NGANPGMSNF…GNTVPSAPQQ (80 aa)) form a disordered region. Positions 193-204 (NPGMSNFNNSNP) are enriched in low complexity.

Belongs to the ExbD/TolR family.

It localises to the cell inner membrane. The protein is Putative biopolymer transport protein ExbD of Synechocystis sp. (strain ATCC 27184 / PCC 6803 / Kazusa).